We begin with the raw amino-acid sequence, 322 residues long: 4-diphosphocytidyl-2-C-methyl-D-erythritol kinase (322 aa).

Lys18 is a catalytic residue. Residue 130 to 140 (PMGAGLGGGSS) participates in ATP binding. The active site involves Asp172.

Belongs to the GHMP kinase family. IspE subfamily.

The enzyme catalyses 4-CDP-2-C-methyl-D-erythritol + ATP = 4-CDP-2-C-methyl-D-erythritol 2-phosphate + ADP + H(+). It participates in isoprenoid biosynthesis; isopentenyl diphosphate biosynthesis via DXP pathway; isopentenyl diphosphate from 1-deoxy-D-xylulose 5-phosphate: step 3/6. In terms of biological role, catalyzes the phosphorylation of the position 2 hydroxy group of 4-diphosphocytidyl-2C-methyl-D-erythritol. This is 4-diphosphocytidyl-2-C-methyl-D-erythritol kinase from Psychrobacter cryohalolentis (strain ATCC BAA-1226 / DSM 17306 / VKM B-2378 / K5).